Reading from the N-terminus, the 204-residue chain is Putative rubrerythrin (204 aa).

The 159-residue stretch at 1–159 folds into the Ferritin-like diiron domain; that stretch reads MINNFFVINM…KLLKEVEEGT (159 aa). Positions 24, 57, 107, 110, 141, 144, 171, 174, 187, and 190 each coordinate Fe(3+). In terms of domain architecture, Rubredoxin-like spans 166 to 204; it reads PVEWVCRKCGFVHLGKEPPEKCPSCSHPRKYFEVKCEKY.

As to quaternary structure, homodimer. Possesses two rubredoxin-like centers and two non-sulfur oxo-bridged di-iron centers per dimer. Fe(3+) is required as a cofactor.

It is found in the cytoplasm. In terms of biological role, may provide oxidative stress protection via catalytic reduction of intracellular hydrogen peroxide. The chain is Putative rubrerythrin from Methanocaldococcus jannaschii (strain ATCC 43067 / DSM 2661 / JAL-1 / JCM 10045 / NBRC 100440) (Methanococcus jannaschii).